The following is a 439-amino-acid chain: Ribosomal protein uS12 methylthiotransferase RimO (439 aa).

One can recognise an MTTase N-terminal domain in the interval 2-114; that stretch reads SKLYLMSLGC…IDEMILKKTN (113 aa). Residues cysteine 11, cysteine 45, cysteine 77, cysteine 146, cysteine 150, and cysteine 153 each coordinate [4Fe-4S] cluster. Positions 132–363 constitute a Radical SAM core domain; the sequence is TGSNSHAFIK…VDEVIEKSFE (232 aa).

Belongs to the methylthiotransferase family. RimO subfamily. The cofactor is [4Fe-4S] cluster.

The protein localises to the cytoplasm. The catalysed reaction is L-aspartate(89)-[ribosomal protein uS12]-hydrogen + (sulfur carrier)-SH + AH2 + 2 S-adenosyl-L-methionine = 3-methylsulfanyl-L-aspartate(89)-[ribosomal protein uS12]-hydrogen + (sulfur carrier)-H + 5'-deoxyadenosine + L-methionine + A + S-adenosyl-L-homocysteine + 2 H(+). In terms of biological role, catalyzes the methylthiolation of an aspartic acid residue of ribosomal protein uS12. The protein is Ribosomal protein uS12 methylthiotransferase RimO of Campylobacter jejuni subsp. jejuni serotype O:6 (strain 81116 / NCTC 11828).